Reading from the N-terminus, the 492-residue chain is Glutamyl-tRNA(Gln) amidotransferase subunit A (492 aa).

Catalysis depends on charge relay system residues Lys-78 and Ser-158. Residue Ser-182 is the Acyl-ester intermediate of the active site.

It belongs to the amidase family. GatA subfamily. Heterotrimer of A, B and C subunits.

It carries out the reaction L-glutamyl-tRNA(Gln) + L-glutamine + ATP + H2O = L-glutaminyl-tRNA(Gln) + L-glutamate + ADP + phosphate + H(+). In terms of biological role, allows the formation of correctly charged Gln-tRNA(Gln) through the transamidation of misacylated Glu-tRNA(Gln) in organisms which lack glutaminyl-tRNA synthetase. The reaction takes place in the presence of glutamine and ATP through an activated gamma-phospho-Glu-tRNA(Gln). This chain is Glutamyl-tRNA(Gln) amidotransferase subunit A, found in Orientia tsutsugamushi (strain Boryong) (Rickettsia tsutsugamushi).